The following is a 338-amino-acid chain: MRVLGIETSCDETGIAVYDDKLGLLSHALYSQVKLHADYGGVVPELASRDHVRKIVPLIRQALKNANTEIADLDGIAYTKGPGLIGALLVGACVGRSLAFAWNKPAIGVHHMEGHLLAPMLEDDAPEFPFVALLVSGGHSMLVKVDGIGLYEVLGESVDDAAGEAFDKTAKLMGLDYPGGPRLAKLAAKGEPAGYQFPRPMTDRPGLDFSFSGLKTFTANTIAAEPDDEQTRANIARAFEEAVVDTLAIKCRRALKQTGYNRLVIAGGVSANTRLRETLAEMMTSIGGRVYYPRGEFCTDNGAMIAFAGLQRLKAGQQEDLAVKGQPRWPLDTLPPVA.

Fe cation contacts are provided by histidine 111 and histidine 115. Residues 134–138, aspartate 167, glycine 180, and asparagine 272 contribute to the substrate site; that span reads LVSGG. Aspartate 300 serves as a coordination point for Fe cation.

This sequence belongs to the KAE1 / TsaD family. Fe(2+) is required as a cofactor.

Its subcellular location is the cytoplasm. It catalyses the reaction L-threonylcarbamoyladenylate + adenosine(37) in tRNA = N(6)-L-threonylcarbamoyladenosine(37) in tRNA + AMP + H(+). Required for the formation of a threonylcarbamoyl group on adenosine at position 37 (t(6)A37) in tRNAs that read codons beginning with adenine. Is involved in the transfer of the threonylcarbamoyl moiety of threonylcarbamoyl-AMP (TC-AMP) to the N6 group of A37, together with TsaE and TsaB. TsaD likely plays a direct catalytic role in this reaction. This Shewanella sp. (strain ANA-3) protein is tRNA N6-adenosine threonylcarbamoyltransferase.